Here is a 97-residue protein sequence, read N- to C-terminus: Large ribosomal subunit protein uL23 (97 aa).

Belongs to the universal ribosomal protein uL23 family. As to quaternary structure, part of the 50S ribosomal subunit. Contacts protein L29, and trigger factor when it is bound to the ribosome.

Its function is as follows. One of the early assembly proteins it binds 23S rRNA. One of the proteins that surrounds the polypeptide exit tunnel on the outside of the ribosome. Forms the main docking site for trigger factor binding to the ribosome. The sequence is that of Large ribosomal subunit protein uL23 from Brucella abortus (strain S19).